Reading from the N-terminus, the 146-residue chain is D-aminoacyl-tRNA deacylase (146 aa).

A Gly-cisPro motif, important for rejection of L-amino acids motif is present at residues 137 to 138 (GP).

Belongs to the DTD family. In terms of assembly, homodimer.

It localises to the cytoplasm. The enzyme catalyses glycyl-tRNA(Ala) + H2O = tRNA(Ala) + glycine + H(+). It catalyses the reaction a D-aminoacyl-tRNA + H2O = a tRNA + a D-alpha-amino acid + H(+). In terms of biological role, an aminoacyl-tRNA editing enzyme that deacylates mischarged D-aminoacyl-tRNAs. Also deacylates mischarged glycyl-tRNA(Ala), protecting cells against glycine mischarging by AlaRS. Acts via tRNA-based rather than protein-based catalysis; rejects L-amino acids rather than detecting D-amino acids in the active site. By recycling D-aminoacyl-tRNA to D-amino acids and free tRNA molecules, this enzyme counteracts the toxicity associated with the formation of D-aminoacyl-tRNA entities in vivo and helps enforce protein L-homochirality. The polypeptide is D-aminoacyl-tRNA deacylase (Bacillus cereus (strain B4264)).